The primary structure comprises 131 residues: Large ribosomal subunit protein bL17 (131 aa).

The protein belongs to the bacterial ribosomal protein bL17 family. As to quaternary structure, part of the 50S ribosomal subunit. Contacts protein L32.

This chain is Large ribosomal subunit protein bL17, found in Oenococcus oeni (strain ATCC BAA-331 / PSU-1).